The sequence spans 65 residues: Large ribosomal subunit protein bL35 (65 aa).

This sequence belongs to the bacterial ribosomal protein bL35 family.

This Acetivibrio thermocellus (strain ATCC 27405 / DSM 1237 / JCM 9322 / NBRC 103400 / NCIMB 10682 / NRRL B-4536 / VPI 7372) (Clostridium thermocellum) protein is Large ribosomal subunit protein bL35.